Consider the following 85-residue polypeptide: Acyl carrier protein (85 aa).

In terms of domain architecture, Carrier spans 4–79 (DELFEKVKEI…NAVNLLSEKL (76 aa)). Ser39 is subject to O-(pantetheine 4'-phosphoryl)serine.

Belongs to the acyl carrier protein (ACP) family. 4'-phosphopantetheine is transferred from CoA to a specific serine of apo-ACP by AcpS. This modification is essential for activity because fatty acids are bound in thioester linkage to the sulfhydryl of the prosthetic group.

It localises to the cytoplasm. Its pathway is lipid metabolism; fatty acid biosynthesis. Functionally, carrier of the growing fatty acid chain in fatty acid biosynthesis. The protein is Acyl carrier protein of Petrotoga mobilis (strain DSM 10674 / SJ95).